Reading from the N-terminus, the 142-residue chain is Galactose-6-phosphate isomerase subunit LacA (142 aa).

It belongs to the LacAB/RpiB family. As to quaternary structure, heteromultimeric protein consisting of LacA and LacB.

It catalyses the reaction aldehydo-D-galactose 6-phosphate = keto-D-tagatose 6-phosphate. The protein operates within carbohydrate metabolism; D-galactose 6-phosphate degradation; D-tagatose 6-phosphate from D-galactose 6-phosphate: step 1/1. The protein is Galactose-6-phosphate isomerase subunit LacA of Staphylococcus aureus.